The sequence spans 137 residues: 1,4-dihydroxy-2-naphthoyl-CoA hydrolase (137 aa).

D13 is an active-site residue.

This sequence belongs to the 4-hydroxybenzoyl-CoA thioesterase family. DHNA-CoA hydrolase subfamily.

It catalyses the reaction 1,4-dihydroxy-2-naphthoyl-CoA + H2O = 1,4-dihydroxy-2-naphthoate + CoA + H(+). It functions in the pathway cofactor biosynthesis; phylloquinone biosynthesis. The protein operates within quinol/quinone metabolism; 1,4-dihydroxy-2-naphthoate biosynthesis; 1,4-dihydroxy-2-naphthoate from chorismate: step 7/7. Catalyzes the hydrolysis of 1,4-dihydroxy-2-naphthoyl-CoA (DHNA-CoA) to 1,4-dihydroxy-2-naphthoate (DHNA), a reaction involved in phylloquinone (vitamin K1) biosynthesis. The protein is 1,4-dihydroxy-2-naphthoyl-CoA hydrolase of Crocosphaera subtropica (strain ATCC 51142 / BH68) (Cyanothece sp. (strain ATCC 51142)).